The chain runs to 2269 residues: Anaphase-promoting complex subunit 1 (2269 aa).

5 disordered regions span residues 305–334 (PSSN…QTIN), 379–433 (SSPP…QENS), 609–644 (NNNN…RKPL), 804–845 (KVYP…NNNN), and 1136–1197 (STAS…NSTS). Composition is skewed to low complexity over residues 306–334 (SSNA…QTIN), 379–430 (SSPP…QQQQ), 609–638 (NNNN…NNNN), 809–845 (NNNN…NNNN), and 1136–1159 (STAS…GQSN). Residues 1160 to 1177 (GLPMNSTTNQMNSHQINN) are compositionally biased toward polar residues. 2 PC repeats span residues 1440–1472 (AALM…PIND) and 1483–1520 (TAGM…ISKE). Positions 1535–1586 (STPSISSNRNNNDLFNNGSNNNSSSNGGGGGGGGNNNGNNSNNGNNGSSQFK) are disordered. The segment covering 1540–1559 (SSNRNNNDLFNNGSNNNSSS) has biased composition (low complexity). Over residues 1560-1570 (NGGGGGGGGNN) the composition is skewed to gly residues. Low complexity predominate over residues 1571–1583 (NGNNSNNGNNGSS). PC repeat units lie at residues 1605 to 1637 (GAII…GLNY), 1722 to 1756 (GAAF…RQVY), and 1792 to 1807 (LVMA…KILR). Residues 1960–1993 (NNNNNNNNNNNNNNNNNNNNNNNNNNNNNNNNNN) show a composition bias toward low complexity. Residues 1960 to 1997 (NNNNNNNNNNNNNNNNNNNNNNNNNNNNNNNNNNKNIL) form a disordered region.

Belongs to the APC1 family. The APC/C is composed of at least 13 subunits that stay tightly associated throughout the cell cycle: anapc1, anapc2, anapc3, anapc4, anapc5, anapc6, anapc7, anapc8, anapc10, anapc11, cdc20, cdc26 and cdh1.

It is found in the nucleus. Its pathway is protein modification; protein ubiquitination. Component of the anaphase promoting complex/cyclosome (APC/C), a cell cycle-regulated E3 ubiquitin-protein ligase complex that controls progression through mitosis and the G1 phase of the cell cycle. This is Anaphase-promoting complex subunit 1 (anapc1) from Dictyostelium discoideum (Social amoeba).